We begin with the raw amino-acid sequence, 284 residues long: Bifunctional protein FolD (284 aa).

Residues 164 to 166 (GRG), Thr-189, and Ile-230 contribute to the NADP(+) site.

The protein belongs to the tetrahydrofolate dehydrogenase/cyclohydrolase family. Homodimer.

The enzyme catalyses (6R)-5,10-methylene-5,6,7,8-tetrahydrofolate + NADP(+) = (6R)-5,10-methenyltetrahydrofolate + NADPH. It catalyses the reaction (6R)-5,10-methenyltetrahydrofolate + H2O = (6R)-10-formyltetrahydrofolate + H(+). The protein operates within one-carbon metabolism; tetrahydrofolate interconversion. Catalyzes the oxidation of 5,10-methylenetetrahydrofolate to 5,10-methenyltetrahydrofolate and then the hydrolysis of 5,10-methenyltetrahydrofolate to 10-formyltetrahydrofolate. This chain is Bifunctional protein FolD, found in Pelotomaculum thermopropionicum (strain DSM 13744 / JCM 10971 / SI).